Here is a 735-residue protein sequence, read N- to C-terminus: DNA replication licensing factor mcm5 (735 aa).

In terms of domain architecture, MCM spans 332–538 (IYETVAKSIA…RDMTLAKHVM (207 aa)). R372 contributes to the ADP binding site. The Arginine finger motif lies at 513-516 (SRFD).

Belongs to the MCM family. Component of the mcm2-7 complex (RLF-M). The complex forms a toroidal hexameric ring with the proposed subunit order mcm2-mcm6-mcm4-mcm7-mcm3-mcm5. The heterodimer of mmcm3/mcm5 interacts with mcm4, mmcm6, mcm7 and weakly with mcm2. Component of the CMG helicase complex, composed of the mcm2-7 complex, the GINS complex and cdc45.

Its subcellular location is the nucleus. The protein localises to the chromosome. It catalyses the reaction ATP + H2O = ADP + phosphate + H(+). In terms of biological role, acts as a component of the MCM2-7 complex (MCM complex) which is the replicative helicase essential for 'once per cell cycle' DNA replication initiation and elongation in eukaryotic cells. Core component of CDC45-MCM-GINS (CMG) helicase, the molecular machine that unwinds template DNA during replication, and around which the replisome is built. The active ATPase sites in the MCM2-7 ring are formed through the interaction surfaces of two neighboring subunits such that a critical structure of a conserved arginine finger motif is provided in trans relative to the ATP-binding site of the Walker A box of the adjacent subunit. The six ATPase active sites, however, are likely to contribute differentially to the complex helicase activity. This Xenopus tropicalis (Western clawed frog) protein is DNA replication licensing factor mcm5.